The chain runs to 306 residues: MELVFLGTGAGVPSRGRNVTSIALSMLNERNAIWLFDCGEATQHQVLRSHIKLSKLEKIFITHMHGDHIFGLPGLLSSRSFQGGDSDLTIYGPAGIAEYVETSLRLSGTRLTYKINFEEIEPGVIFEDEMFLVTADDLDHGVRSFGYRIVEKDKQGALNAEKLKADGVEAGPVFQKLKNGEIVTLADGRVIDGKNYIGEPQKGKIISIFGDTKETVSELELAMNADILVHEATFEGDKAKMAGEYMHSTTLQAANLAKAANVKKLILTHISSRYDRDASKELLIEAKTVFENTEIAYDLAVFQVGE.

7 residues coordinate Zn(2+): H63, H65, D67, H68, H140, D211, and H269. Catalysis depends on D67, which acts as the Proton acceptor.

The protein belongs to the RNase Z family. As to quaternary structure, homodimer. Requires Zn(2+) as cofactor.

It carries out the reaction Endonucleolytic cleavage of RNA, removing extra 3' nucleotides from tRNA precursor, generating 3' termini of tRNAs. A 3'-hydroxy group is left at the tRNA terminus and a 5'-phosphoryl group is left at the trailer molecule.. Zinc phosphodiesterase, which displays some tRNA 3'-processing endonuclease activity. Probably involved in tRNA maturation, by removing a 3'-trailer from precursor tRNA. This Listeria innocua serovar 6a (strain ATCC BAA-680 / CLIP 11262) protein is Ribonuclease Z.